We begin with the raw amino-acid sequence, 66 residues long: Toxin Boma6a (66 aa).

The 63-residue stretch at 2-64 folds into the LCN-type CS-alpha/beta domain; the sequence is RDAYIAQNYN…VPIKVEGKCH (63 aa). 4 cysteine pairs are disulfide-bonded: C12–C63, C16–C36, C22–C46, and C26–C48.

Belongs to the long (4 C-C) scorpion toxin superfamily. Sodium channel inhibitor family. Alpha subfamily. In terms of tissue distribution, expressed by the venom gland.

The protein resides in the secreted. Alpha toxins bind voltage-independently at site-3 of sodium channels (Nav) and inhibit the inactivation of the activated channels, thereby blocking neuronal transmission. The protein is Toxin Boma6a of Buthus occitanus mardochei (Moroccan scorpion).